A 113-amino-acid chain; its full sequence is Ribosome-binding factor A (113 aa).

The protein belongs to the RbfA family. As to quaternary structure, monomer. Binds 30S ribosomal subunits, but not 50S ribosomal subunits or 70S ribosomes.

It localises to the cytoplasm. In terms of biological role, one of several proteins that assist in the late maturation steps of the functional core of the 30S ribosomal subunit. Associates with free 30S ribosomal subunits (but not with 30S subunits that are part of 70S ribosomes or polysomes). Required for efficient processing of 16S rRNA. May interact with the 5'-terminal helix region of 16S rRNA. This is Ribosome-binding factor A from Lactococcus lactis subsp. cremoris (Streptococcus cremoris).